The primary structure comprises 245 residues: tRNA1(Val) (adenine(37)-N6)-methyltransferase (245 aa).

Belongs to the methyltransferase superfamily. tRNA (adenine-N(6)-)-methyltransferase family.

It localises to the cytoplasm. The enzyme catalyses adenosine(37) in tRNA1(Val) + S-adenosyl-L-methionine = N(6)-methyladenosine(37) in tRNA1(Val) + S-adenosyl-L-homocysteine + H(+). In terms of biological role, specifically methylates the adenine in position 37 of tRNA(1)(Val) (anticodon cmo5UAC). The polypeptide is tRNA1(Val) (adenine(37)-N6)-methyltransferase (Cronobacter sakazakii (strain ATCC BAA-894) (Enterobacter sakazakii)).